We begin with the raw amino-acid sequence, 450 residues long: FAD-linked oxidoreductase ptmO (450 aa).

An FAD-binding PCMH-type domain is found at 32 to 203 (PPELPYAIVR…TRFFIRTRPA (172 aa)).

It belongs to the oxygen-dependent FAD-linked oxidoreductase family. FAD serves as cofactor.

It participates in secondary metabolite biosynthesis. In terms of biological role, FAD-linked oxidoreductase; part of the gene cluster that mediates the biosynthesis of the indole diterpenes penitrems. The geranylgeranyl diphosphate (GGPP) synthase ptmG catalyzes the first step in penitrem biosynthesis via conversion of farnesyl pyrophosphate and isopentyl pyrophosphate into geranylgeranyl pyrophosphate (GGPP). Condensation of indole-3-glycerol phosphate with GGPP by the prenyl transferase ptmC then forms 3-geranylgeranylindole (3-GGI). Epoxidation by the FAD-dependent monooxygenase ptmM leads to a epoxidized-GGI that is substrate of the terpene cyclase ptmB for cyclization to yield paspaline. Paspaline is subsequently converted to 13-desoxypaxilline by the cytochrome P450 monooxygenase ptmP, the latter being then converted to paxilline by the cytochrome P450 monooxygenase ptmQ. Paxilline is converted to beta-paxitriol via C-10 ketoreduction by the short-chain dehydrogenase ptmH which can be monoprenylated at the C-20 by the indole diterpene prenyltransferase ptmD. A two-step elimination (acetylation and elimination) process performed by the O-acetyltransferase ptmV and ptmI leads to the production of the prenylated form of penijanthine. The FAD-linked oxidoreductase ptmO then converts the prenylated form of penijanthine into PC-M5 which is in turn transformed into PC-M4 by the aromatic dimethylallyltransferase ptmE. Five sequential oxidative transformations performed by the cytochrome P450 monooxygenases ptmK, ptmU, ptmL, ptmN and ptmJ yield the various penitrem compounds. PtmK, ptmU and ptmM are involved in the formation of the key bicyclic ring of penitrem C via the formation of the intermediates secopenitrem D and penitrem D. PtmL catalyzes the epoxidation of penitrem D and C to yield penitrem B and F, respectively. PtmJ catalyzes the last benzylic hydroxylation to convert penitrem B to prenitrem E and penitrem F to penitrem A. The protein is FAD-linked oxidoreductase ptmO of Penicillium ochrochloron.